A 371-amino-acid polypeptide reads, in one-letter code: Cytochrome b (371 aa).

Helical transmembrane passes span 25 to 45, 69 to 90, 105 to 125, and 170 to 190; these read FGSM…SLSM, WVMQ…YMYI, WLSG…GYVL, and FFAL…IHIM. His75 lines the heme b pocket. Heme b-binding residues include His174 and His188. An a ubiquinone-binding site is contributed by His193. 4 helical membrane passes run 218-238, 280-300, 312-332, and 339-358; these read YKDI…VSFF, LGGA…PFTH, LMQF…WTAT, and FTTI…MSNP.

Belongs to the cytochrome b family. As to quaternary structure, the cytochrome bc1 complex contains 3 respiratory subunits (MT-CYB, CYC1 and UQCRFS1), 2 core proteins (UQCRC1 and UQCRC2) and probably 6 low-molecular weight proteins. It depends on heme b as a cofactor.

It is found in the mitochondrion inner membrane. In terms of biological role, component of the ubiquinol-cytochrome c reductase complex (complex III or cytochrome b-c1 complex) that is part of the mitochondrial respiratory chain. The b-c1 complex mediates electron transfer from ubiquinol to cytochrome c. Contributes to the generation of a proton gradient across the mitochondrial membrane that is then used for ATP synthesis. This chain is Cytochrome b (MT-CYB), found in Candoia aspera (New Guinea boa).